The primary structure comprises 263 residues: Endonuclease 8 (263 aa).

The active-site Schiff-base intermediate with DNA is P2. Residue E3 is the Proton donor of the active site. Residue K53 is the Proton donor; for beta-elimination activity of the active site. Residues Q70, R125, and N169 each contribute to the DNA site. An FPG-type zinc finger spans residues 229–263 (KVFHRDGELCERCGGIIEKTTLSSRPFYWCPGCQH). R253 functions as the Proton donor; for delta-elimination activity in the catalytic mechanism.

This sequence belongs to the FPG family. It depends on Zn(2+) as a cofactor.

It carries out the reaction 2'-deoxyribonucleotide-(2'-deoxyribose 5'-phosphate)-2'-deoxyribonucleotide-DNA = a 3'-end 2'-deoxyribonucleotide-(2,3-dehydro-2,3-deoxyribose 5'-phosphate)-DNA + a 5'-end 5'-phospho-2'-deoxyribonucleoside-DNA + H(+). In terms of biological role, involved in base excision repair of DNA damaged by oxidation or by mutagenic agents. Acts as a DNA glycosylase that recognizes and removes damaged bases. Has a preference for oxidized pyrimidines, such as thymine glycol, 5,6-dihydrouracil and 5,6-dihydrothymine. Has AP (apurinic/apyrimidinic) lyase activity and introduces nicks in the DNA strand. Cleaves the DNA backbone by beta-delta elimination to generate a single-strand break at the site of the removed base with both 3'- and 5'-phosphates. In Escherichia coli O157:H7, this protein is Endonuclease 8.